We begin with the raw amino-acid sequence, 249 residues long: Aliphatic sulfonates import ATP-binding protein SsuB 2 (249 aa).

Residues 15 to 231 (VHVRDLARRF…DHGDPRFAQF (217 aa)) enclose the ABC transporter domain. 47 to 54 (GRSGSGKS) contributes to the ATP binding site.

It belongs to the ABC transporter superfamily. Aliphatic sulfonates importer (TC 3.A.1.17.2) family. The complex is composed of two ATP-binding proteins (SsuB), two transmembrane proteins (SsuC) and a solute-binding protein (SsuA).

It is found in the cell inner membrane. It catalyses the reaction ATP + H2O + aliphatic sulfonate-[sulfonate-binding protein]Side 1 = ADP + phosphate + aliphatic sulfonateSide 2 + [sulfonate-binding protein]Side 1.. Its function is as follows. Part of the ABC transporter complex SsuABC involved in aliphatic sulfonates import. Responsible for energy coupling to the transport system. The chain is Aliphatic sulfonates import ATP-binding protein SsuB 2 from Rhizobium johnstonii (strain DSM 114642 / LMG 32736 / 3841) (Rhizobium leguminosarum bv. viciae).